The primary structure comprises 1663 residues: Cortactin-binding protein 2 (1663 aa).

5 disordered regions span residues 1 to 23 (MATD…AGAA), 203 to 222 (KKKT…RSTE), 358 to 440 (RQAS…LHPG), 454 to 479 (GNAN…PTSR), and 498 to 616 (RFTS…PKPS). Residues 119-276 (KKMQERMSAQ…EQLKRGSDSK (158 aa)) are a coiled coil. Residues 386–396 (PSTDSTPDPTS) are compositionally biased toward low complexity. A compositionally biased stretch (polar residues) spans 411–422 (QTPGIAPQNSQA). Residue Arg498 is modified to Asymmetric dimethylarginine. Residues 583–597 (TVASPPSSLPQGNRV) are compositionally biased toward polar residues. ANK repeat units lie at residues 709 to 739 (GRPT…DINY), 743 to 772 (DGHS…QINA), 776 to 805 (NGFT…NINH), 809 to 838 (GGQT…NRSV), 842 to 871 (DGWT…PACG), and 912 to 942 (EGWT…EPER). Residues 1447–1477 (KKKGESGAWRKVNTSPRRKSGRFSLPTWNKP) form a disordered region. Residue Ser1524 is modified to Phosphoserine. 2 disordered regions span residues 1581 to 1602 (QKEV…KSKT) and 1618 to 1663 (SKVT…KHNK). Positions 1582-1599 (KEVSPLSSHQTTECSNSK) are enriched in polar residues. A compositionally biased stretch (low complexity) spans 1624 to 1638 (SQNTKRSSSSSNTRQ). Residues 1645 to 1663 (SKEENWNLHKNEHLDKHNK) show a composition bias toward basic and acidic residues.

As to quaternary structure, interacts with CTTN/cortactin SH3 domain. Interacts with STRN, STRN4/zinedin and MOB4/phocein; this interactions mediate the association with the STRIPAK core complex and may regulate dendritic spine distribution of the STRIPAK complex in hippocampal neurons. Activation of glutamate receptors weakens the interaction with STRN and STRN4.

The protein localises to the cytoplasm. It is found in the cell cortex. Its subcellular location is the cell projection. It localises to the dendritic spine. In terms of biological role, regulates the dendritic spine distribution of CTTN/cortactin in hippocampal neurons, and thus controls dendritic spinogenesis and dendritic spine maintenance. Associates with the striatin-interacting phosphatase and kinase (STRIPAK) core complex to regulate dendritic spine distribution of the STRIPAK complex in hippocampal neurons. This Papio anubis (Olive baboon) protein is Cortactin-binding protein 2 (CTTNBP2).